Reading from the N-terminus, the 494-residue chain is Histidine--tRNA ligase (494 aa).

Residues 1 to 20 (MAKDQKKQPRPKAETPKGFR) are disordered.

The protein belongs to the class-II aminoacyl-tRNA synthetase family. As to quaternary structure, homodimer.

It localises to the cytoplasm. It carries out the reaction tRNA(His) + L-histidine + ATP = L-histidyl-tRNA(His) + AMP + diphosphate + H(+). The protein is Histidine--tRNA ligase of Paracoccus denitrificans (strain Pd 1222).